Reading from the N-terminus, the 933-residue chain is MYRSTKGASKARRDQINAEIRNLKDLLPISDADKSRLSYLHIMSLACMYTRKSVFFSQDITTASSAEETTGFLSFYELNELIQGMPGFLLLLTGEGKLLYLSDSVSDHLGHSMVDLVAQGDSVYDIIDTADHFIMRSNLVPPTSPDTDRLFRCRFNTSKSVRRQSAGNKLVLIRARCLSQTPSESSPGSYWTSNPVWVCFCAPLEPHTSRGGTASDRESTSASALESSFFLPCFRSQHSRDMRLHEAQESVSVYLGLNVEILRSQSWYSFLHPQDLSHASAQHCSLLREGGEGRAEMVVRVETADHSWVWLYMVLQLETGETPIVSNNYIISETEAWSVRQQLSSEQTQLSLVLGSSTSQQESVSLQSPETLSSPDQVFTPGSSGLSGQSFDFSTAACSTGSTEEQGGSSSMEPAQVESGPRSSLSSMEEETFFQHEPSEPMASPSSASSPIPVTVATVSDLDFLTQNILLPPAFQIDPPLPVLPLPLPPVPTSQAQQTKEFVCTPPYTPQLGGSNFPFGEPHFSFDPTGATSPPPLGQTATVTTTTAPSLSPSAPSNPQSSPPPPTTTLSSLLPLTITSPTTEILFPVEPCSGSLYEKLPPTPDSPGDGDCTVMTLPEVRGPLYVDVPHGPLPYPPEGLLTPEASPGKQPSLPFFSSLRDREKERTEISLLAQHISTLAEGFYLDPLLAKLVPSTLSEHSQSPDSDGLDSIPLLGEFYPLKSWKGLDLPIFQDDESLFEESVLETLLQDLSSSPPLSPTPSSSSHSSPPSSPSTPECWCPSLHFDGVSAVSAGHFCSVQSAHCNNEAGRGAMMSPVNAGNMTDTKAAGEVPMETDVASSPLFTGIPTSPPLQLTASPASPILMPVSSPVSPPSPGLPCAQSLLEELAALEPMFGAGASIAPGLGQQPELYQLQSHVPQQCFRKDGSGSDPPF.

Residues 1–13 (MYRSTKGASKARR) form a basic motif; degenerate region. One can recognise a bHLH domain in the interval 1-53 (MYRSTKGASKARRDQINAEIRNLKDLLPISDADKSRLSYLHIMSLACMYTRKS). A helix-loop-helix motif region spans residues 14–53 (DQINAEIRNLKDLLPISDADKSRLSYLHIMSLACMYTRKS). PAS domains lie at 74–148 (SFYE…PDTD) and 220–290 (TSAS…LREG). The PAC domain occupies 295–334 (AEMVVRVETADHSWVWLYMVLQLETGETPIVSNNYIISET). The segment covering 361–398 (QESVSLQSPETLSSPDQVFTPGSSGLSGQSFDFSTAAC) has biased composition (polar residues). 3 disordered regions span residues 361 to 451 (QESV…ASSP), 514 to 573 (GSNF…LSSL), and 750 to 776 (DLSS…PSTP). Composition is skewed to low complexity over residues 399–411 (STGS…GSSS), 440–451 (EPMASPSSASSP), 538–560 (GQTA…SNPQ), and 751–769 (LSSS…HSSP).

Efficient DNA binding requires dimerization with another bHLH protein. In terms of tissue distribution, brain-specific.

The protein localises to the nucleus. Functionally, transcription factor expressed in neurons of the brain that regulates the excitatory-inhibitory balance within neural circuits and is required for contextual memory in the hippocampus. Plays a key role in the structural and functional plasticity of neurons. Acts as an early-response transcription factor in both excitatory and inhibitory neurons, where it induces distinct but overlapping sets of late-response genes in these two types of neurons, allowing the synapses that form on inhibitory and excitatory neurons to be modified by neuronal activity in a manner specific to their function within a circuit, thereby facilitating appropriate circuit responses to sensory experience. This is Neuronal PAS domain-containing protein 4A (npas4a) from Danio rerio (Zebrafish).